Consider the following 699-residue polypeptide: D-(-)-3-hydroxybutyrate oligomer hydrolase (699 aa).

A signal peptide spans 1–33; that stretch reads MTAIRGGSRRAPGLALALLGGVLLGACHGDENA. Ser-311 (charge relay system) is an active-site residue.

It belongs to the D-(-)-3-hydroxybutyrate oligomer hydrolase family.

It is found in the secreted. It catalyses the reaction (3R)-hydroxybutanoate dimer + H2O = 2 (R)-3-hydroxybutanoate + H(+). The protein operates within lipid metabolism; butanoate metabolism. Functionally, participates in the degradation of poly-3-hydroxybutyrate (PHB). It works downstream of poly(3-hydroxybutyrate) depolymerase, hydrolyzing D(-)-3-hydroxybutyrate oligomers of various length (3HB-oligomers) into 3HB-monomers. The sequence is that of D-(-)-3-hydroxybutyrate oligomer hydrolase from Burkholderia pseudomallei (strain 1710b).